We begin with the raw amino-acid sequence, 60 residues long: Large ribosomal subunit protein bL32 (60 aa).

It belongs to the bacterial ribosomal protein bL32 family.

This is Large ribosomal subunit protein bL32 from Ruminiclostridium cellulolyticum (strain ATCC 35319 / DSM 5812 / JCM 6584 / H10) (Clostridium cellulolyticum).